The sequence spans 63 residues: ORF6 protein (63 aa).

Belongs to the coronaviruses accessory protein 6 family.

It localises to the host endoplasmic reticulum membrane. Its subcellular location is the host Golgi apparatus membrane. In terms of biological role, could be a determinant of virus virulence. Seems to stimulate cellular DNA synthesis in vitro. This Bat coronavirus HKU3 (BtCoV) protein is ORF6 protein.